Reading from the N-terminus, the 332-residue chain is T-cell leukemia homeobox protein 1 (332 aa).

The homeobox DNA-binding region spans 203–262 (KKKPRTSFTRLQICELEKRFHRQKYLASAERAALAKALKMTDAQVKTWFQNRRTKWRRQT). Lysine 238 carries the post-translational modification N6-acetyllysine.

In terms of tissue distribution, expressed in various embryonic tissues, including branchial arches, some component of the nervous system and spleen.

The protein resides in the nucleus. Its function is as follows. Controls the genesis of the spleen. Binds to the DNA sequence 5'-GGCGGTAAGTGG-3'. This Mus musculus (Mouse) protein is T-cell leukemia homeobox protein 1 (Tlx1).